We begin with the raw amino-acid sequence, 951 residues long: Valine--tRNA ligase (951 aa).

The 'HIGH' region motif lies at 42-52 (PNVTGSLHMGH). Positions 554–558 (KMSKS) match the 'KMSKS' region motif. K557 is an ATP binding site. Positions 880-944 (AGLINKEDEL…AEAKAKLIEQ (65 aa)) form a coiled coil.

This sequence belongs to the class-I aminoacyl-tRNA synthetase family. ValS type 1 subfamily. In terms of assembly, monomer.

It is found in the cytoplasm. It carries out the reaction tRNA(Val) + L-valine + ATP = L-valyl-tRNA(Val) + AMP + diphosphate. Its function is as follows. Catalyzes the attachment of valine to tRNA(Val). As ValRS can inadvertently accommodate and process structurally similar amino acids such as threonine, to avoid such errors, it has a 'posttransfer' editing activity that hydrolyzes mischarged Thr-tRNA(Val) in a tRNA-dependent manner. In Escherichia coli (strain K12), this protein is Valine--tRNA ligase (valS).